Consider the following 333-residue polypeptide: MPIRHIIVHQIDKKPDGTPAVLHARDTELGASQAIENMLADLNESYNAKQGKAWGLFHGESGAYPFSRWLKDYLDENQDFTAFSRHAVEHLQKLMEESNLSTGGHVLFAHYQQGMTDYLTVALLHHSEGVAVNDTLDVTPAKHLDLGQLHLAARINISEWQNNKQSKQYISFIKGKNGRKVSDYFRDFIGCQEGVDAPGETRTLLKAFSDFVESEDLPEEQAREKTNTLVGYATSQAKLGEPMTLEELSGLIDEDRPKAFYDHIRNRDYGLSPEIPADKRTLNQFRRFTGRAEGLSISFEAHLLGSKIDYDENAGTLTIRNLPTQLRDQLKRG.

It belongs to the YejK family.

It localises to the cytoplasm. The protein localises to the nucleoid. The polypeptide is Nucleoid-associated protein (Metapseudomonas resinovorans (Pseudomonas resinovorans)).